The chain runs to 268 residues: Ubiquinone/menaquinone biosynthesis C-methyltransferase UbiE (268 aa).

The tract at residues 1–23 is disordered; sequence MTDQHAFATEQVQLDPTLSPTTE. Residues 10-23 are compositionally biased toward polar residues; the sequence is EQVQLDPTLSPTTE. Residues Thr-91, Asp-112, 140 to 141, and Ser-157 each bind S-adenosyl-L-methionine; that span reads NA.

The protein belongs to the class I-like SAM-binding methyltransferase superfamily. MenG/UbiE family.

It carries out the reaction a 2-demethylmenaquinol + S-adenosyl-L-methionine = a menaquinol + S-adenosyl-L-homocysteine + H(+). It catalyses the reaction a 2-methoxy-6-(all-trans-polyprenyl)benzene-1,4-diol + S-adenosyl-L-methionine = a 5-methoxy-2-methyl-3-(all-trans-polyprenyl)benzene-1,4-diol + S-adenosyl-L-homocysteine + H(+). Its pathway is quinol/quinone metabolism; menaquinone biosynthesis; menaquinol from 1,4-dihydroxy-2-naphthoate: step 2/2. The protein operates within cofactor biosynthesis; ubiquinone biosynthesis. Its function is as follows. Methyltransferase required for the conversion of demethylmenaquinol (DMKH2) to menaquinol (MKH2) and the conversion of 2-polyprenyl-6-methoxy-1,4-benzoquinol (DDMQH2) to 2-polyprenyl-3-methyl-6-methoxy-1,4-benzoquinol (DMQH2). The chain is Ubiquinone/menaquinone biosynthesis C-methyltransferase UbiE from Pasteurella multocida (strain Pm70).